Here is a 498-residue protein sequence, read N- to C-terminus: ATP synthase subunit beta, chloroplastic (498 aa).

ATP is bound at residue 172–179 (GGAGVGKT).

It belongs to the ATPase alpha/beta chains family. In terms of assembly, F-type ATPases have 2 components, CF(1) - the catalytic core - and CF(0) - the membrane proton channel. CF(1) has five subunits: alpha(3), beta(3), gamma(1), delta(1), epsilon(1). CF(0) has four main subunits: a(1), b(1), b'(1) and c(9-12).

The protein resides in the plastid. Its subcellular location is the chloroplast thylakoid membrane. It catalyses the reaction ATP + H2O + 4 H(+)(in) = ADP + phosphate + 5 H(+)(out). Its function is as follows. Produces ATP from ADP in the presence of a proton gradient across the membrane. The catalytic sites are hosted primarily by the beta subunits. In Nandina domestica (Heavenly bamboo), this protein is ATP synthase subunit beta, chloroplastic.